The following is a 346-amino-acid chain: Leucine zipper protein 2 (346 aa).

A signal peptide spans 1–17 (MKFIGAVYLLFLLPALS). Asn19 and Asn131 each carry an N-linked (GlcNAc...) asparagine glycan. The stretch at 41–209 (RHLSKTSKEL…QLKALKDTVH (169 aa)) forms a coiled coil. Residues 162–190 (LRYGKKDLIFKGQQLMDLENKLKVAKDEL) form a leucine-zipper region. Residues Asn241 and Asn296 are each glycosylated (N-linked (GlcNAc...) asparagine). Positions 271-346 (SAVMRRESTG…LKKTQSDKHN (76 aa)) are disordered. Over residues 293–324 (CSHNQTESSSVMKKTFGHSQSKTPEQNGQGQA) the composition is skewed to polar residues. Basic and acidic residues predominate over residues 326 to 346 (TAEESVKTDGELKKTQSDKHN).

Its subcellular location is the secreted. The sequence is that of Leucine zipper protein 2 (luzp2) from Danio rerio (Zebrafish).